The sequence spans 152 residues: Transcriptional regulator MraZ (152 aa).

SpoVT-AbrB domains lie at 5-52 and 81-124; these read ATLV…PLPE and ASEC…DETT.

Belongs to the MraZ family. In terms of assembly, forms oligomers.

It localises to the cytoplasm. It is found in the nucleoid. In terms of biological role, negatively regulates its own expression and that of the subsequent genes in the proximal part of the division and cell wall (dcw) gene cluster. Acts by binding directly to DNA. May also regulate the expression of genes outside the dcw cluster. The polypeptide is Transcriptional regulator MraZ (Klebsiella pneumoniae subsp. pneumoniae (strain ATCC 700721 / MGH 78578)).